Reading from the N-terminus, the 675-residue chain is Calcium channel YVC1 (675 aa).

8 helical membrane-spanning segments follow: residues 244 to 264 (ILEI…VNTH), 271 to 291 (IDFF…DEFI), 301 to 321 (LGFW…AVCF), 355 to 375 (LLLF…LKTM), 380 to 400 (ILFF…FIGL), 440 to 460 (VLYY…LIAL), 495 to 515 (LYVP…WFVS), and 518 to 538 (TWKN…LAYI). Positions 644–675 (YEVIEKIDKLTNLLEVVVAENKELKKRLENKA) form a coiled coil.

The protein belongs to the transient receptor (TC 1.A.4) family.

It localises to the vacuole membrane. Its function is as follows. Vacuolar calcium channel involved in the release of calcium ions from the vacuole in response to hyperosmotic or alkaline stress. Required for activation of CAP1-related transcription of oxidative stress response (OSR) genes, but also for maintaining the stability of both the mitochondria and the vacuole in a potassium- and calcium-dependent manner. Contributes to pathogenicity. Plays a key role in hyphal polarized growth and re-orientation to host-signals through its contribution to the localization of the Spitzenkoerper to the hyphal tips. The polypeptide is Calcium channel YVC1 (YVC1) (Candida albicans (strain SC5314 / ATCC MYA-2876) (Yeast)).